We begin with the raw amino-acid sequence, 729 residues long: Sodium-dependent neutral amino acid transporter B(0)AT2 (729 aa).

Residues 1–69 (MPKNSKVVKR…ARPAWNSKLQ (69 aa)) lie on the Cytoplasmic side of the membrane. Residues Ser25 and Ser55 each carry the phosphoserine modification. Helical transmembrane passes span 70-90 (YILA…FPYL), 98-117 (AYLL…LFFL), and 142-162 (GIGF…NVII). Topologically, residues 163 to 225 (GWSLFYFSQS…TSISESGGLN (63 aa)) are extracellular. N-linked (GlcNAc...) asparagine glycosylation is found at Asn187 and Asn213. Helical transmembrane passes span 226 to 244 (WKMT…LAMI), 253 to 270 (IMYF…CFLI), 306 to 323 (VFFA…FSSY), and 335 to 356 (VLVS…FAVL). The Extracellular segment spans residues 357–452 (GFKANVINEK…FIAFTEAMTH (96 aa)). N-linked (GlcNAc...) asparagine glycosylation is found at Asn383 and Asn394. The next 5 membrane-spanning stretches (helical) occupy residues 453 to 472 (FPAS…NLGL), 496 to 514 (ILTV…IFVQ), 530 to 550 (TLPL…VYGI), 571 to 592 (YMWK…IVNM), and 620 to 642 (VICI…IRRC). The Cytoplasmic segment spans residues 643–729 (NLIDDSSGNL…DMPDMPESDL (87 aa)). Residues Ser687, Ser699, and Ser701 each carry the phosphoserine modification.

It belongs to the sodium:neurotransmitter symporter (SNF) (TC 2.A.22) family. SLC6A15 subfamily.

It is found in the membrane. The catalysed reaction is L-leucine(in) + Na(+)(in) = L-leucine(out) + Na(+)(out). It catalyses the reaction L-isoleucine(in) + Na(+)(in) = L-isoleucine(out) + Na(+)(out). It carries out the reaction L-methionine(in) + Na(+)(in) = L-methionine(out) + Na(+)(out). The enzyme catalyses L-proline(in) + Na(+)(in) = L-proline(out) + Na(+)(out). The catalysed reaction is L-alanine(in) + Na(+)(in) = L-alanine(out) + Na(+)(out). It catalyses the reaction L-asparagine(in) + Na(+)(in) = L-asparagine(out) + Na(+)(out). It carries out the reaction L-valine(in) + Na(+)(in) = L-valine(out) + Na(+)(out). The enzyme catalyses L-cysteine(in) + Na(+)(in) = L-cysteine(out) + Na(+)(out). The catalysed reaction is L-glutamine(in) + Na(+)(in) = L-glutamine(out) + Na(+)(out). It catalyses the reaction L-serine(in) + Na(+)(in) = L-serine(out) + Na(+)(out). It carries out the reaction L-threonine(in) + Na(+)(in) = L-threonine(out) + Na(+)(out). The enzyme catalyses L-pipecolate(in) + Na(+)(in) = L-pipecolate(out) + Na(+)(out). The catalysed reaction is L-phenylalanine(in) + Na(+)(in) = L-phenylalanine(out) + Na(+)(out). Functionally, functions as a sodium-dependent neutral amino acid transporter. Exhibits preference for the branched-chain amino acids, particularly leucine, valine and isoleucine and methionine. Can also transport low-affinity substrates such as alanine, phenylalanine, glutamine and pipecolic acid. Mediates the saturable, pH-sensitive and electrogenic cotransport of proline and sodium ions with a stoichiometry of 1:1. May have a role as transporter for neurotransmitter precursors into neurons. In contrast to other members of the neurotransmitter transporter family, does not appear to be chloride-dependent. In Bos taurus (Bovine), this protein is Sodium-dependent neutral amino acid transporter B(0)AT2 (SLC6A15).